The following is a 1110-amino-acid chain: Ribosome assembly protein 1 (1110 aa).

A tr-type G domain is found at 17 to 262 (SCIRNICIVA…QKLGAKRENL (246 aa)). GTP contacts are provided by residues 26–33 (AHVDHGKT), 102–106 (DSPGH), and 156–159 (NKID). Serine 431 carries the post-translational modification Phosphoserine.

Belongs to the TRAFAC class translation factor GTPase superfamily. Classic translation factor GTPase family.

The protein resides in the cytoplasm. The catalysed reaction is GTP + H2O = GDP + phosphate + H(+). With respect to regulation, GTPase activity is stimulated in the presence of 60S subunits. In terms of biological role, GTPase involved in the biogenesis of the 60S ribosomal subunit and translational activation of ribosomes. Together with SDO1, may trigger the GTP-dependent release of TIF6 from 60S pre-ribosomes in the cytoplasm, thereby activating ribosomes for translation competence by allowing 80S ribosome assembly and facilitating TIF6 recycling to the nucleus, where it is required for 60S rRNA processing and nuclear export. Inhibits GTPase activity of ribosome-bound EF-2. This chain is Ribosome assembly protein 1 (RIA1), found in Saccharomyces cerevisiae (strain ATCC 204508 / S288c) (Baker's yeast).